Consider the following 427-residue polypeptide: Polyprenol-phosphate-mannose-dependent alpha-(1-2)-phosphatidylinositol mannoside mannosyltransferase (427 aa).

10 helical membrane passes run 18-38 (LWCL…WRLF), 101-121 (ASVA…AIVL), 143-163 (WLAV…SSNF), 191-211 (LMLG…LYFL), 218-238 (AALT…VLAW), 279-299 (ERFA…IWAM), 308-328 (PTLA…VSWS), 331-346 (WVWM…LLGW), 351-371 (VALA…PIDL), and 386-406 (LAGM…GLTV).

Belongs to the glycosyltransferase 87 family.

The protein localises to the cell membrane. It participates in phospholipid metabolism; phosphatidylinositol metabolism. In terms of biological role, responsible for the addition of alpha-(1-2) mannose branches to the linear mannan core on the biosynthetic pathway to mature lipoarabinomannan (LAM). This is Polyprenol-phosphate-mannose-dependent alpha-(1-2)-phosphatidylinositol mannoside mannosyltransferase from Mycobacterium tuberculosis (strain ATCC 25618 / H37Rv).